Consider the following 115-residue polypeptide: Meromycolate extension acyl carrier protein (115 aa).

A Carrier domain is found at 3–81; it reads VTQEEIIAGI…DVVTYIQKLE (79 aa). S41 is subject to O-(pantetheine 4'-phosphoryl)serine.

It belongs to the acyl carrier protein (ACP) family. 4'-phosphopantetheine is transferred from CoA to a specific serine of apo-AcpM.

It is found in the cytoplasm. Functionally, acyl carrier protein involved in meromycolate extension. The sequence is that of Meromycolate extension acyl carrier protein (acpM) from Mycobacterium leprae (strain TN).